We begin with the raw amino-acid sequence, 113 residues long: UPF0482 protein KPK_2871 (113 aa).

The N-terminal stretch at M1–A28 is a signal peptide. The tract at residues G38–R61 is disordered. Residues D39 to S48 show a composition bias toward polar residues. Residues M49 to S59 are compositionally biased toward basic and acidic residues.

The protein belongs to the UPF0482 family.

This chain is UPF0482 protein KPK_2871, found in Klebsiella pneumoniae (strain 342).